The following is a 254-amino-acid chain: DNA-3-methyladenine glycosylase (254 aa).

Basic residues predominate over residues 1 to 10 (MKTPARRSKR). The segment at 1 to 20 (MKTPARRSKRVNQEESETNV) is disordered.

The protein belongs to the DNA glycosylase MPG family.

The protein localises to the nucleus. The catalysed reaction is Hydrolysis of alkylated DNA, releasing 3-methyladenine, 3-methylguanine, 7-methylguanine and 7-methyladenine.. Its function is as follows. Hydrolysis of the deoxyribose N-glycosidic bond to excise 3-methyladenine, and 7-methylguanine from the damaged DNA polymer formed by alkylation lesions. The protein is DNA-3-methyladenine glycosylase (MAG) of Arabidopsis thaliana (Mouse-ear cress).